A 155-amino-acid polypeptide reads, in one-letter code: Ribosomal RNA large subunit methyltransferase H (155 aa).

S-adenosyl-L-methionine-binding positions include leucine 72, glycine 104, and 123 to 128 (LAKITL).

This sequence belongs to the RNA methyltransferase RlmH family. In terms of assembly, homodimer.

It localises to the cytoplasm. It carries out the reaction pseudouridine(1915) in 23S rRNA + S-adenosyl-L-methionine = N(3)-methylpseudouridine(1915) in 23S rRNA + S-adenosyl-L-homocysteine + H(+). Its function is as follows. Specifically methylates the pseudouridine at position 1915 (m3Psi1915) in 23S rRNA. The polypeptide is Ribosomal RNA large subunit methyltransferase H (Mycoplasma mycoides subsp. mycoides SC (strain CCUG 32753 / NCTC 10114 / PG1)).